The following is a 307-amino-acid chain: MVQLQVFISGLLLLLPGSVDSYEVVKGVVGHPVTIPCTYSTRGGITTTCWGRGQCPYSSCQNILIWTNGYQVTYRSSGRYNIKGRISEGDVSLTIENSVDSDSGLYCCRVEIPGWFNDQKMTFSLEVKPEIPTSPPTRPTTTRPTTTRPTTISTRSTHVPTSTRVSTSTPTPEQTQTHKPEITTFYAHETTAEVTETPSYTPADWNGTVTSSEEAWNNHTVRIPLRKPQRNPTKGFYVGMSVAALLLLLLASTVVVTRYIIIRKKMGSLSFVAFHVSKSRALQNAAIVHPRAEDNIYIIEDRSRGAE.

The N-terminal stretch at 1 to 21 is a signal peptide; that stretch reads MVQLQVFISGLLLLLPGSVDS. In terms of domain architecture, Ig-like V-type spans 22–124; the sequence is YEVVKGVVGH…WFNDQKMTFS (103 aa). At 22–235 the chain is on the extracellular side; that stretch reads YEVVKGVVGH…RKPQRNPTKG (214 aa). 3 disulfides stabilise this stretch: cysteine 37-cysteine 108, cysteine 49-cysteine 60, and cysteine 55-cysteine 107. The segment at 129–177 is disordered; the sequence is PEIPTSPPTRPTTTRPTTTRPTTISTRSTHVPTSTRVSTSTPTPEQTQT. Positions 139–175 are enriched in low complexity; the sequence is PTTTRPTTTRPTTISTRSTHVPTSTRVSTSTPTPEQT. Residue asparagine 206 is glycosylated (N-linked (GlcNAc...) asparagine). The chain crosses the membrane as a helical span at residues 236–256; it reads FYVGMSVAALLLLLLASTVVV. The Cytoplasmic portion of the chain corresponds to 257 to 307; the sequence is TRYIIIRKKMGSLSFVAFHVSKSRALQNAAIVHPRAEDNIYIIEDRSRGAE.

It belongs to the immunoglobulin superfamily. TIM family. Interacts with STAM. Interacts with SELPLG. In terms of tissue distribution, expressed at a low level in normal kidney but are increased dramatically in postischemic kidney. Expressed in proliferating bromodeoxyuridine-positive and dedifferentiated vimentin-positive epithelial cells in regenerating proximal tubules.

The protein localises to the cell membrane. Functionally, phosphatidylserine receptor that plays an important functional role in regulatory B-cells homeostasis including generation, expansion and suppressor functions. As P-selectin/SELPLG ligand, plays a specialized role in activated but not naive T-cell trafficking during inflammatory responses. Controls thereby T-cell accumulation in the inflamed central nervous system (CNS) and the induction of autoimmune disease. Also regulates expression of various anti-inflammatory cytokines and co-inhibitory ligands including IL10. Acts as a regulator of T-cell proliferation. May play a role in kidney injury and repair. The protein is Hepatitis A virus cellular receptor 1 homolog (Havcr1) of Rattus norvegicus (Rat).